A 214-amino-acid polypeptide reads, in one-letter code: MKLFLDTANIQEIKEAWSLGIIDGVTTNPTHISKENKKFRELIEEICSIVDGPISVEAVSLKAEEIVREAEELSKISPNIVVKIPAIKEGIKAAKILSEKGIKTNITLVFSPSQALLAGKVGATYVSPFVGRLNDISEEGINLVADIKKIYSNYGFKTQIIVSAIRNPMHVVKAALIGADVATMRFDILMSLFRHPMTDLGLEQFLKDWEKVPK.

Lysine 83 serves as the catalytic Schiff-base intermediate with substrate.

Belongs to the transaldolase family. Type 3B subfamily.

Its subcellular location is the cytoplasm. It carries out the reaction D-sedoheptulose 7-phosphate + D-glyceraldehyde 3-phosphate = D-erythrose 4-phosphate + beta-D-fructose 6-phosphate. It participates in carbohydrate degradation; pentose phosphate pathway; D-glyceraldehyde 3-phosphate and beta-D-fructose 6-phosphate from D-ribose 5-phosphate and D-xylulose 5-phosphate (non-oxidative stage): step 2/3. Transaldolase is important for the balance of metabolites in the pentose-phosphate pathway. The sequence is that of Probable transaldolase from Dictyoglomus turgidum (strain DSM 6724 / Z-1310).